A 1906-amino-acid chain; its full sequence is Alpha-2-macroglobulin homolog (1906 aa).

The N-terminal stretch at 1 to 21 (MIIRVCIRCFIVLTLVLGIGG) is a signal peptide. Cys-22 is lipidated: N-palmitoyl cysteine. A lipid anchor (S-diacylglycerol cysteine) is attached at Cys-22.

The protein belongs to the protease inhibitor I39 (alpha-2-macroglobulin) family. Bacterial alpha-2-macroglobulin subfamily.

The protein resides in the cell membrane. This chain is Alpha-2-macroglobulin homolog, found in Nostoc sp. (strain PCC 7120 / SAG 25.82 / UTEX 2576).